The following is a 962-amino-acid chain: Glycine dehydrogenase (decarboxylating) (962 aa).

At Lys709 the chain carries N6-(pyridoxal phosphate)lysine.

It belongs to the GcvP family. As to quaternary structure, the glycine cleavage system is composed of four proteins: P, T, L and H. Pyridoxal 5'-phosphate serves as cofactor.

The catalysed reaction is N(6)-[(R)-lipoyl]-L-lysyl-[glycine-cleavage complex H protein] + glycine + H(+) = N(6)-[(R)-S(8)-aminomethyldihydrolipoyl]-L-lysyl-[glycine-cleavage complex H protein] + CO2. In terms of biological role, the glycine cleavage system catalyzes the degradation of glycine. The P protein binds the alpha-amino group of glycine through its pyridoxal phosphate cofactor; CO(2) is released and the remaining methylamine moiety is then transferred to the lipoamide cofactor of the H protein. The polypeptide is Glycine dehydrogenase (decarboxylating) (Shewanella sp. (strain MR-7)).